A 228-amino-acid polypeptide reads, in one-letter code: Probable septum site-determining protein MinC (228 aa).

Belongs to the MinC family. In terms of assembly, interacts with MinD and FtsZ.

Cell division inhibitor that blocks the formation of polar Z ring septums. Rapidly oscillates between the poles of the cell to destabilize FtsZ filaments that have formed before they mature into polar Z rings. Prevents FtsZ polymerization. The chain is Probable septum site-determining protein MinC from Yersinia pseudotuberculosis serotype O:1b (strain IP 31758).